The primary structure comprises 97 residues: MKMICAIYRSTKRDQTYLYIEKKDDFSRIPEELLQSFGEPQFAMLLDLAQRQRLANADIEKVKQALTDQGFYLQVPPPVESMLNAYLDELKNSEKTE.

Residues 3–87 (MICAIYRSTK…PVESMLNAYL (85 aa)) form the YcgL domain.

This Proteus mirabilis (strain HI4320) protein is YcgL domain-containing protein PMI1171.